A 381-amino-acid chain; its full sequence is GDP-mannose transporter (381 aa).

A compositionally biased stretch (basic and acidic residues) spans 1 to 12 (MSDDKKSDDYRV). A disordered region spans residues 1-28 (MSDDKKSDDYRVDMPSSRTSRAPSPIMR). The Cytoplasmic segment spans residues 1 to 36 (MSDDKKSDDYRVDMPSSRTSRAPSPIMRPALKSAPS). The chain crosses the membrane as a helical span at residues 37–57 (LTENPMAAVLAYCASSILMTV). Over 58–67 (TNKYVLSGVD) the chain is Lumenal. A helical membrane pass occupies residues 68–88 (FNLNFFLLCVQSVVCVTAISI). Residues 89–107 (CKAAGLITYRDFNTDEAKK) are Cytoplasmic-facing. A helical transmembrane segment spans residues 108-126 (WFPISLLLIGMIYTGTWAL). The Lumenal portion of the chain corresponds to 127-130 (KYLS). Residues 131-153 (IPVYTIFKNLTIILIAYGEVLWF) form a helical membrane-spanning segment. Over 154 to 161 (GGSVTPMT) the chain is Cytoplasmic. A helical membrane pass occupies residues 162-184 (LFSFGLMVLSSIIAAWADIQHAL). Residues 185 to 199 (NSFGQQSEAANEALS) are Lumenal-facing. A helical membrane pass occupies residues 200-220 (TMHAGYLWMAFNCVCSATYLL). Topologically, residues 221-242 (SMRKRIKLTNFKDYDTMYYNNL) are cytoplasmic. A helical transmembrane segment spans residues 243-263 (LTIPILLVASILVEDWSSANI). The Lumenal segment spans residues 264–274 (QKNFPPEQRNT). A helical transmembrane segment spans residues 275-295 (VIMVMVISGMSTVFISYTSAW). At 296 to 303 (AVRVTSST) the chain is on the cytoplasmic side. The chain crosses the membrane as a helical span at residues 304 to 324 (TYSMVGALNKLPIAISGLVFF). The Lumenal portion of the chain corresponds to 325-327 (DAP). The helical transmembrane segment at 328–348 (VTFGSVSAIFVGFVSGIVYAV) threads the bilayer. The Cytoplasmic portion of the chain corresponds to 349–381 (AKVRQNSKPKTVLPTTNIPLSASSRSMQDSLKA).

This sequence belongs to the TPT transporter family. SLC35D subfamily. Homooligomer.

It localises to the golgi apparatus membrane. It is found in the cytoplasmic vesicle membrane. The protein resides in the endoplasmic reticulum membrane. Functionally, involved in the import of GDP-mannose from the cytoplasm into the Golgi lumen. This is GDP-mannose transporter (VRG4) from Phaeosphaeria nodorum (strain SN15 / ATCC MYA-4574 / FGSC 10173) (Glume blotch fungus).